The chain runs to 119 residues: Large ribosomal subunit protein bL20 (119 aa).

This sequence belongs to the bacterial ribosomal protein bL20 family.

In terms of biological role, binds directly to 23S ribosomal RNA and is necessary for the in vitro assembly process of the 50S ribosomal subunit. It is not involved in the protein synthesizing functions of that subunit. The sequence is that of Large ribosomal subunit protein bL20 from Gloeobacter violaceus (strain ATCC 29082 / PCC 7421).